A 312-amino-acid polypeptide reads, in one-letter code: R2-like ligand binding oxidase (312 aa).

The Mn(2+) site is built by Glu68, Glu101, and His104. Residues Val71–Tyr162 constitute a cross-link (3-(O4'-tyrosyl)-valine (Val-Tyr)). Glu101 is a binding site for Fe cation. Fe cation-binding residues include Glu167, Glu202, and His205.

This sequence belongs to the ribonucleoside diphosphate reductase small chain family. R2-like ligand binding oxidase subfamily. In terms of assembly, homodimer. It depends on Fe cation as a cofactor. Requires Mn(2+) as cofactor.

Probable oxidase that might be involved in lipid metabolism. The chain is R2-like ligand binding oxidase from Mycobacterium sp. (strain JLS).